A 272-amino-acid chain; its full sequence is MDRYAVFGNPIEHSKSPLIHTLFAKQTQQVIEYGRQQPDSNGFNDAINAFFTEGFIGANVTSPFKLDAFRFADELTPRARAAEAVNTLYKRQDGSILGDNTDGAGLVQDLQRLWGELNGKRLLLIGAGGATRGVILPLLTAKVQNIHIANRTASKAQQLADRFKKEGVITASGFNDLPEIQFDLIVNCTSSSLDGGLPEITPSIFINASYAYDMTYKAQATSFMVWAQECTPSIRTADGLGMLVGQAAESFYVWRKVRPKIEPIIEIVREML.

Shikimate is bound by residues Ser-14–Ser-16 and Thr-61. The Proton acceptor role is filled by Lys-65. The shikimate site is built by Asn-86 and Asp-102. NADP(+) contacts are provided by residues Gly-126–Ala-130, Asn-150–Lys-155, and Met-214. Residue Tyr-216 coordinates shikimate. Gly-239 serves as a coordination point for NADP(+).

It belongs to the shikimate dehydrogenase family. Homodimer.

It carries out the reaction shikimate + NADP(+) = 3-dehydroshikimate + NADPH + H(+). It functions in the pathway metabolic intermediate biosynthesis; chorismate biosynthesis; chorismate from D-erythrose 4-phosphate and phosphoenolpyruvate: step 4/7. Its function is as follows. Involved in the biosynthesis of the chorismate, which leads to the biosynthesis of aromatic amino acids. Catalyzes the reversible NADPH linked reduction of 3-dehydroshikimate (DHSA) to yield shikimate (SA). The polypeptide is Shikimate dehydrogenase (NADP(+)) (Pseudoalteromonas atlantica (strain T6c / ATCC BAA-1087)).